The primary structure comprises 233 residues: MPKHGKRYRALIEKVDRNKQYTIDEAAALVKELATAKFDETVEVHFRLGIDPRKSDQNVRGTVALPHGTGRTVRVAVITKGENVAAAEAAGADVVGSDELIERIAGGFMEFDAVVATPDMMAAVGQKLARLLGPRGLLPNPKSGTVGPDVTGMVRGLKAGRIEFRNDKTGVVHAPIGKASFDPSNLSANYGALISALEAAKPGTAKGVFLRSAYMTTTMGPSIPLTLSGGAQA.

The protein belongs to the universal ribosomal protein uL1 family. Part of the 50S ribosomal subunit.

Its function is as follows. Binds directly to 23S rRNA. The L1 stalk is quite mobile in the ribosome, and is involved in E site tRNA release. Protein L1 is also a translational repressor protein, it controls the translation of the L11 operon by binding to its mRNA. In Deinococcus deserti (strain DSM 17065 / CIP 109153 / LMG 22923 / VCD115), this protein is Large ribosomal subunit protein uL1.